Reading from the N-terminus, the 365-residue chain is Aminomethyltransferase (365 aa).

This sequence belongs to the GcvT family. The glycine cleavage system is composed of four proteins: P, T, L and H.

The catalysed reaction is N(6)-[(R)-S(8)-aminomethyldihydrolipoyl]-L-lysyl-[protein] + (6S)-5,6,7,8-tetrahydrofolate = N(6)-[(R)-dihydrolipoyl]-L-lysyl-[protein] + (6R)-5,10-methylene-5,6,7,8-tetrahydrofolate + NH4(+). Functionally, the glycine cleavage system catalyzes the degradation of glycine. The sequence is that of Aminomethyltransferase from Chlorobium phaeobacteroides (strain DSM 266 / SMG 266 / 2430).